A 315-amino-acid polypeptide reads, in one-letter code: MRPEDLARMSVAELRERFLDRNRALSPECEAALTTDPRAGAREVLRLILKRRHANRAEGQRLRHLLRYEGELWDGGVTLVAGVDEAGMAPLAGPVVAGACILPRDYRPRGIDDSKQLDRRERERLAEDIKANAVCWAVARAEVEEIDRLNIYRAGLLALTRAVQALTPAPGHVLVDARKLPELRLPQTPIIHGDALSLTIAAASILAKTTRDELMGELDALYPGYGFCNHKGYPTAEHFQALERLGACPIHRRSFQPVREALGLAPLQGELFAPPPESAAEPGGEGAIAGIAPGSAPCDVAEPLPARTPASARGI.

The RNase H type-2 domain maps to 78–267 (TLVAGVDEAG…VREALGLAPL (190 aa)). 3 residues coordinate a divalent metal cation: aspartate 84, glutamate 85, and aspartate 176. Residues 273 to 292 (APPPESAAEPGGEGAIAGIA) form a disordered region. Residues 278 to 292 (SAAEPGGEGAIAGIA) are compositionally biased toward low complexity.

The protein belongs to the RNase HII family. It depends on Mn(2+) as a cofactor. Requires Mg(2+) as cofactor.

The protein resides in the cytoplasm. It catalyses the reaction Endonucleolytic cleavage to 5'-phosphomonoester.. Endonuclease that specifically degrades the RNA of RNA-DNA hybrids. This chain is Ribonuclease HII, found in Anaeromyxobacter sp. (strain Fw109-5).